The following is a 488-amino-acid chain: MADLASRITKPDEVAAETPAETPAETAPAASGELGQADGNIEDLGGSGLQEPEWDVEVSLSELQNNEATPFHSATTWQDLGLREDLLKGLLSLNFLKPSKVQGKSLPLMLSDPPRNMLAQSQSGTGKTAAFVTAILSRVDFSKPDQPQALALAPSRELARQIEGVINAIGRFVENKKVAAAIPGVLPRGEPVRASVIVGTPGTVMDIIRRRQLDISQLRVLVLDEADNMLDQQGLGDQCLKVKNMLPKEIQVLLFSATFPENVMKYAGKFAPNAHSLKLQRSELTVKGISQMFIDCPDDNMKYDILCKLYGLMTIGQSVIFVKTRDSASEIERRMVADGHKVSALHAAFDGAERDNLLTKFRQGENKVLITTNVLARGIDVSSVSMVINYDIPMKGRGDTEPDAETYLHRIGRTGRFGRVGVSISFVYDKKSFDALSKIAEMYGIDLVKLDTEDWDEAEERVKEVIKKNRAQASYAPSATEPKAAAGA.

Positions 1 to 49 (MADLASRITKPDEVAAETPAETPAETAPAASGELGQADGNIEDLGGSGL) are disordered. Positions 16–30 (AETPAETPAETAPAA) are enriched in low complexity. The short motif at 75 to 103 (TTWQDLGLREDLLKGLLSLNFLKPSKVQG) is the Q motif element. Positions 108 to 277 (LMLSDPPRNM…GKFAPNAHSL (170 aa)) constitute a Helicase ATP-binding domain. 121 to 128 (SQSGTGKT) lines the ATP pocket. Positions 224–227 (DEAD) match the DEAD box motif. One can recognise a Helicase C-terminal domain in the interval 305–466 (ILCKLYGLMT…EAEERVKEVI (162 aa)).

The protein belongs to the DEAD box helicase family. DDX19/DBP5 subfamily. Associates with the nuclear pore complex.

It localises to the cytoplasm. It is found in the nucleus. The protein resides in the nuclear pore complex. The protein localises to the nucleus membrane. It carries out the reaction ATP + H2O = ADP + phosphate + H(+). ATP-dependent RNA helicase associated with the nuclear pore complex and essential for mRNA export from the nucleus. May participate in a terminal step of mRNA export through the removal of proteins that accompany mRNA through the nucleopore complex. May also be involved in early transcription. The protein is ATP-dependent RNA helicase DBP5 (DBP5) of Gibberella zeae (strain ATCC MYA-4620 / CBS 123657 / FGSC 9075 / NRRL 31084 / PH-1) (Wheat head blight fungus).